Reading from the N-terminus, the 340-residue chain is UDP-3-O-(3-hydroxymyristoyl)glucosamine N-acyltransferase (340 aa).

Residue H239 is the Proton acceptor of the active site.

Belongs to the transferase hexapeptide repeat family. LpxD subfamily. As to quaternary structure, homotrimer.

It carries out the reaction a UDP-3-O-[(3R)-3-hydroxyacyl]-alpha-D-glucosamine + a (3R)-hydroxyacyl-[ACP] = a UDP-2-N,3-O-bis[(3R)-3-hydroxyacyl]-alpha-D-glucosamine + holo-[ACP] + H(+). The enzyme catalyses UDP-3-O-[(3R)-3-hydroxytetradecanoyl]-alpha-D-glucosamine + (3R)-hydroxytetradecanoyl-[ACP] = UDP-2-N,3-O-bis[(3R)-3-hydroxytetradecanoyl]-alpha-D-glucosamine + holo-[ACP] + H(+). It functions in the pathway glycolipid biosynthesis; lipid IV(A) biosynthesis; lipid IV(A) from (3R)-3-hydroxytetradecanoyl-[acyl-carrier-protein] and UDP-N-acetyl-alpha-D-glucosamine: step 3/6. In terms of biological role, catalyzes the N-acylation of UDP-3-O-(hydroxytetradecanoyl)glucosamine using 3-hydroxytetradecanoyl-ACP as the acyl donor. Is involved in the biosynthesis of lipid A, a phosphorylated glycolipid that anchors the lipopolysaccharide to the outer membrane of the cell. The protein is UDP-3-O-(3-hydroxymyristoyl)glucosamine N-acyltransferase of Sodalis glossinidius (strain morsitans).